We begin with the raw amino-acid sequence, 139 residues long: Cytochrome c2 (139 aa).

Positions 1-25 are cleaved as a signal peptide; the sequence is MVKKLLTILSIAATAGSLSIGTASA. At Gln-26 the chain carries Pyrrolidone carboxylic acid. Residues Cys-38, Cys-41, His-42, and Met-118 each coordinate heme c.

It belongs to the cytochrome c family. Post-translationally, binds 1 heme c group covalently per subunit.

Functionally, cytochrome c2 is found mainly in purple, non-sulfur, photosynthetic bacteria where it functions as the electron donor to the oxidized bacteriochlorophyll in the photophosphorylation pathway. However, it may also have a role in the respiratory chain and is found in some non-photosynthetic bacteria. The chain is Cytochrome c2 (cycA) from Rhodopseudomonas palustris (strain ATCC BAA-98 / CGA009).